Here is a 382-residue protein sequence, read N- to C-terminus: Chorismate synthase (382 aa).

The NADP(+) site is built by arginine 39 and arginine 45. The disordered stretch occupies residues serine 89–glycine 113. Residues glycine 94–histidine 108 are compositionally biased toward basic and acidic residues. Residues arginine 128 to serine 130, glutamine 246 to alanine 247, alanine 290, lysine 305 to threonine 309, and arginine 331 contribute to the FMN site.

The protein belongs to the chorismate synthase family. As to quaternary structure, homotetramer. The cofactor is FMNH2.

The enzyme catalyses 5-O-(1-carboxyvinyl)-3-phosphoshikimate = chorismate + phosphate. Its pathway is metabolic intermediate biosynthesis; chorismate biosynthesis; chorismate from D-erythrose 4-phosphate and phosphoenolpyruvate: step 7/7. Catalyzes the anti-1,4-elimination of the C-3 phosphate and the C-6 proR hydrogen from 5-enolpyruvylshikimate-3-phosphate (EPSP) to yield chorismate, which is the branch point compound that serves as the starting substrate for the three terminal pathways of aromatic amino acid biosynthesis. This reaction introduces a second double bond into the aromatic ring system. In Deinococcus radiodurans (strain ATCC 13939 / DSM 20539 / JCM 16871 / CCUG 27074 / LMG 4051 / NBRC 15346 / NCIMB 9279 / VKM B-1422 / R1), this protein is Chorismate synthase.